Here is a 295-residue protein sequence, read N- to C-terminus: UDP-N-acetylenolpyruvoylglucosamine reductase (295 aa).

In terms of domain architecture, FAD-binding PCMH-type spans glycine 27–serine 194. The active site involves arginine 174. Cysteine 221 functions as the Proton donor in the catalytic mechanism. Glutamate 287 is a catalytic residue.

This sequence belongs to the MurB family. The cofactor is FAD.

It is found in the cytoplasm. It catalyses the reaction UDP-N-acetyl-alpha-D-muramate + NADP(+) = UDP-N-acetyl-3-O-(1-carboxyvinyl)-alpha-D-glucosamine + NADPH + H(+). It participates in cell wall biogenesis; peptidoglycan biosynthesis. Functionally, cell wall formation. The polypeptide is UDP-N-acetylenolpyruvoylglucosamine reductase (Deinococcus geothermalis (strain DSM 11300 / CIP 105573 / AG-3a)).